Reading from the N-terminus, the 178-residue chain is Small ribosomal subunit protein bS16 (178 aa).

The tract at residues 78 to 178 is disordered; it reads KLGITQWTAG…AAPAEGEEQA (101 aa). Positions 91 to 113 are enriched in basic and acidic residues; the sequence is KKGEPGQKAKERAEERAQREADR. Low complexity predominate over residues 114 to 127; it reads AAAAAEAAAAPAEE. The span at 128-139 shows a compositional bias: acidic residues; the sequence is APAEEAPAEEAA. Positions 140 to 172 are enriched in low complexity; that stretch reads AEAAPEAAAAEEAPAAEAAAEEAAPAAEEAAPA.

Belongs to the bacterial ribosomal protein bS16 family.

In Phenylobacterium zucineum (strain HLK1), this protein is Small ribosomal subunit protein bS16.